A 692-amino-acid chain; its full sequence is Elongation factor G (692 aa).

The 276-residue stretch at 8 to 283 folds into the tr-type G domain; the sequence is NRIRNIGIAA…AVIDYLPAPT (276 aa). GTP is bound by residues 17–24, 81–85, and 135–138; these read AHIDAGKT, DTPGH, and NKMD.

It belongs to the TRAFAC class translation factor GTPase superfamily. Classic translation factor GTPase family. EF-G/EF-2 subfamily.

The protein localises to the cytoplasm. Functionally, catalyzes the GTP-dependent ribosomal translocation step during translation elongation. During this step, the ribosome changes from the pre-translocational (PRE) to the post-translocational (POST) state as the newly formed A-site-bound peptidyl-tRNA and P-site-bound deacylated tRNA move to the P and E sites, respectively. Catalyzes the coordinated movement of the two tRNA molecules, the mRNA and conformational changes in the ribosome. This Helicobacter pylori (strain J99 / ATCC 700824) (Campylobacter pylori J99) protein is Elongation factor G (fusA).